Reading from the N-terminus, the 235-residue chain is Sugar fermentation stimulation protein homolog (235 aa).

The protein belongs to the SfsA family.

The polypeptide is Sugar fermentation stimulation protein homolog (Aliivibrio salmonicida (strain LFI1238) (Vibrio salmonicida (strain LFI1238))).